We begin with the raw amino-acid sequence, 189 residues long: Protein jagunal homolog (189 aa).

Residues 1-34 (MSSRGVRAAGTDGNDFQNRQRIAQHYQESAQYKS) lie on the Cytoplasmic side of the membrane. Residues 35–55 (VLKWFFVPHFLILVFMWLKVG) form a helical membrane-spanning segment. Residues 56-75 (SEFLRYNFGWKNAFFERLDM) lie on the Lumenal side of the membrane. A helical transmembrane segment spans residues 76–96 (PAAYPWEYVWCLSFIPIVLAL). At 97–105 (SSFQRNKLK) the chain is on the cytoplasmic side. A helical membrane pass occupies residues 106–126 (VLHYAYYAEFICGIFPCMIGL). Residues 127–150 (GGQLPELLEYANDMEGSNTPTFKG) are Lumenal-facing. The helical transmembrane segment at 151-171 (IFPMVIIWYIFFAVALQIHGF) threads the bilayer. Over 172–189 (SMYFMHHLAAAWAPVKRD) the chain is Cytoplasmic.

This sequence belongs to the jagunal family.

Its subcellular location is the endoplasmic reticulum membrane. This Caenorhabditis briggsae protein is Protein jagunal homolog.